Here is a 110-residue protein sequence, read N- to C-terminus: Putative UPF0377 protein YKL223W (110 aa).

Belongs to the UPF0377 family.

The polypeptide is Putative UPF0377 protein YKL223W (Saccharomyces cerevisiae (strain ATCC 204508 / S288c) (Baker's yeast)).